The sequence spans 256 residues: 3-dehydroquinate dehydratase (256 aa).

Residues Glu46 to Arg48 and Arg82 each bind 3-dehydroquinate. His144 functions as the Proton donor/acceptor in the catalytic mechanism. Lys171 acts as the Schiff-base intermediate with substrate in catalysis. 3-dehydroquinate contacts are provided by Arg213, Ser232, and Gln236.

The protein belongs to the type-I 3-dehydroquinase family. In terms of assembly, homodimer.

It catalyses the reaction 3-dehydroquinate = 3-dehydroshikimate + H2O. The protein operates within metabolic intermediate biosynthesis; chorismate biosynthesis; chorismate from D-erythrose 4-phosphate and phosphoenolpyruvate: step 3/7. In terms of biological role, involved in the third step of the chorismate pathway, which leads to the biosynthesis of aromatic amino acids. Catalyzes the cis-dehydration of 3-dehydroquinate (DHQ) and introduces the first double bond of the aromatic ring to yield 3-dehydroshikimate. The protein is 3-dehydroquinate dehydratase of Shouchella clausii (strain KSM-K16) (Alkalihalobacillus clausii).